A 466-amino-acid chain; its full sequence is Reticulophagy regulator 3 (466 aa).

The tract at residues 1–28 (MAEAEGVPTTPGPASGSTFRGRRDVSGS) is disordered. Ala2 is subject to N-acetylalanine. Over 2–80 (AEAEGVPTTP…WCLGLNAAFW (79 aa)) the chain is Cytoplasmic. A Phosphothreonine modification is found at Thr10. The residue at position 26 (Ser26) is a Phosphoserine. The helical transmembrane segment at 81-101 (FFALTSLRLVFLLAFGLMIIV) threads the bilayer. The Lumenal segment spans residues 102–163 (CIDQWKNKIW…FIRNVLLFKK (62 aa)). The helical transmembrane segment at 164–184 (QNPGKFCLLSCGILTFLAVLG) threads the bilayer. Over 185-186 (RY) the chain is Cytoplasmic. A helical transmembrane segment spans residues 187–207 (VPGLLLSYLMLVTVMMWPLAV). Residues 208 to 381 (YHRLWDRAYV…ASRDEAALPE (174 aa)) lie on the Lumenal side of the membrane. Ser258 and Ser260 each carry phosphoserine. A Phosphothreonine modification is found at Thr283. Positions 284 to 374 (DSEHSDAEVS…EEPQAPPASR (91 aa)) are disordered. Phosphoserine occurs at positions 285, 288, 293, and 303. A compositionally biased stretch (polar residues) spans 294-310 (CTDNGTFNLSRGQTPLT). Residues Thr307 and Thr310 each carry the phosphothreonine modification. Residues Ser313, Ser320, and Ser360 each carry the phosphoserine modification. Over residues 316–331 (LDGHSDPEESFARDLP) the composition is skewed to basic and acidic residues. Residues 382–402 (LLLGALPVGSNLTSNLASLVS) traverse the membrane as a helical segment. The Cytoplasmic segment spans residues 403–466 (QGMIQLALSG…QLDPASSRSH (64 aa)). Positions 412–466 (GASQPGPSGAPAQRATRGFLRSPSSDLDTDAEGDDFELLDQSELSQLDPASSRSH) are disordered. A compositionally biased stretch (acidic residues) spans 438–451 (LDTDAEGDDFELLD). Position 440 is a phosphothreonine (Thr440). Positions 445-450 (DDFELL) match the LIR motif motif. Positions 453–466 (SELSQLDPASSRSH) are enriched in polar residues.

The protein belongs to the RETREG family. In terms of assembly, interacts with ATG8 family modifier proteins MAP1LC3A, MAP1LC3B, MAP1LC3C, GABARAP, GABARAPL1 and GABARAPL2. Interacts with CANX. Interacts with RTN4 isoform B.

The protein resides in the endoplasmic reticulum membrane. Its function is as follows. Endoplasmic reticulum (ER)-anchored autophagy regulator which exists in an inactive state under basal conditions but is activated following cellular stress. When activated, induces ER fragmentation and mediates ER delivery into lysosomes through sequestration into autophagosomes via interaction with ATG8 family proteins. Promotes ER membrane curvature and ER tubulation required for subsequent ER fragmentation and engulfment into autophagosomes. Required for collagen quality control in a LIR motif-dependent manner. Mediates NRF1-enhanced neurite outgrowth. The sequence is that of Reticulophagy regulator 3 from Homo sapiens (Human).